The sequence spans 131 residues: Large ribosomal subunit protein bL17 (131 aa).

Belongs to the bacterial ribosomal protein bL17 family. As to quaternary structure, part of the 50S ribosomal subunit. Contacts protein L32.

The sequence is that of Large ribosomal subunit protein bL17 from Thermotoga maritima (strain ATCC 43589 / DSM 3109 / JCM 10099 / NBRC 100826 / MSB8).